We begin with the raw amino-acid sequence, 288 residues long: Pyridoxal kinase PdxY (288 aa).

Substrate is bound by residues serine 12 and 47-48; that span reads TQ. ATP contacts are provided by residues aspartate 114, glutamate 151, lysine 184, and 211-214; that span reads RPLL. Residue aspartate 225 participates in substrate binding.

The protein belongs to the pyridoxine kinase family. PdxY subfamily. In terms of assembly, homodimer. Mg(2+) serves as cofactor.

It catalyses the reaction pyridoxal + ATP = pyridoxal 5'-phosphate + ADP + H(+). The protein operates within cofactor metabolism; pyridoxal 5'-phosphate salvage; pyridoxal 5'-phosphate from pyridoxal: step 1/1. Pyridoxal kinase involved in the salvage pathway of pyridoxal 5'-phosphate (PLP). Catalyzes the phosphorylation of pyridoxal to PLP. The polypeptide is Pyridoxal kinase PdxY (Pseudomonas aeruginosa (strain UCBPP-PA14)).